The following is a 426-amino-acid chain: tRNA modification GTPase MnmE (426 aa).

R20, E77, and M117 together coordinate (6S)-5-formyl-5,6,7,8-tetrahydrofolate. The TrmE-type G domain occupies G213–S350. N223 is a binding site for K(+). GTP is bound by residues N223 to T228, S242 to T248, and D267 to G270. A Mg(2+)-binding site is contributed by S227. Positions 242, 244, and 247 each coordinate K(+). T248 provides a ligand contact to Mg(2+). K426 serves as a coordination point for (6S)-5-formyl-5,6,7,8-tetrahydrofolate.

Belongs to the TRAFAC class TrmE-Era-EngA-EngB-Septin-like GTPase superfamily. TrmE GTPase family. As to quaternary structure, homodimer. Heterotetramer of two MnmE and two MnmG subunits. The cofactor is K(+).

It is found in the cytoplasm. Functionally, exhibits a very high intrinsic GTPase hydrolysis rate. Involved in the addition of a carboxymethylaminomethyl (cmnm) group at the wobble position (U34) of certain tRNAs, forming tRNA-cmnm(5)s(2)U34. The polypeptide is tRNA modification GTPase MnmE (Jannaschia sp. (strain CCS1)).